The chain runs to 430 residues: Mucorpepsin (430 aa).

Residues 1–22 (MLFSQITSAILLTAASLSLTTA) form the signal peptide. The propeptide at 23–69 (RPVSKQSESKDKLLALPLTSVSRKFSQTKFGQQQLAEKLAGLKPFSE) is activation peptide. Residues 89 to 421 (YAIPVSIGTP…DFGNNRIGFA (333 aa)) enclose the Peptidase A1 domain. The active site involves aspartate 107. Cysteine 120 and cysteine 126 are disulfide-bonded. N-linked (GlcNAc...) asparagine glycans are attached at residues asparagine 148 and asparagine 257. Aspartate 306 is a catalytic residue. A disulfide bridge connects residues cysteine 341 and cysteine 385.

It belongs to the peptidase A1 family.

The enzyme catalyses Hydrolysis of proteins, favoring hydrophobic residues at P1 and P1'. Clots milk. Does not accept Lys at P1, and hence does not activate trypsinogen.. This enzyme, capable of clotting milk is frequently used for cheese production. The protein is Mucorpepsin of Rhizomucor miehei.